Reading from the N-terminus, the 145-residue chain is Oocyte zinc finger protein XlCOF8.4I (145 aa).

A disordered region spans residues 1-25; it reads HKREADFCSKGNLTNPEISPVEHYP. The C2H2-type zinc-finger motif lies at 123–145; that stretch reads LSCSECGKCFSTYHVLARHQKTH.

The protein belongs to the krueppel C2H2-type zinc-finger protein family.

The protein localises to the nucleus. Its function is as follows. May be involved in transcriptional regulation. The sequence is that of Oocyte zinc finger protein XlCOF8.4I from Xenopus laevis (African clawed frog).